The sequence spans 339 residues: Dihydroorotate dehydrogenase (quinone) (339 aa).

Residues Ala-61 to Lys-65 and Thr-85 each bind FMN. A substrate-binding site is contributed by Lys-65. Asn-110–Phe-114 contacts substrate. FMN-binding residues include Asn-138 and Asn-171. Residue Asn-171 coordinates substrate. Ser-174 serves as the catalytic Nucleophile. A substrate-binding site is contributed by Asn-176. FMN-binding residues include Lys-216 and Thr-244. A substrate-binding site is contributed by Asn-245 to Thr-246. Residues Gly-267, Gly-296, and Tyr-317–Ser-318 each bind FMN.

The protein belongs to the dihydroorotate dehydrogenase family. Type 2 subfamily. In terms of assembly, monomer. Requires FMN as cofactor.

The protein resides in the cell membrane. The enzyme catalyses (S)-dihydroorotate + a quinone = orotate + a quinol. The protein operates within pyrimidine metabolism; UMP biosynthesis via de novo pathway; orotate from (S)-dihydroorotate (quinone route): step 1/1. Functionally, catalyzes the conversion of dihydroorotate to orotate with quinone as electron acceptor. This chain is Dihydroorotate dehydrogenase (quinone), found in Saccharophagus degradans (strain 2-40 / ATCC 43961 / DSM 17024).